The following is a 421-amino-acid chain: Gamma-glutamyl phosphate reductase (421 aa).

Belongs to the gamma-glutamyl phosphate reductase family.

Its subcellular location is the cytoplasm. It carries out the reaction L-glutamate 5-semialdehyde + phosphate + NADP(+) = L-glutamyl 5-phosphate + NADPH + H(+). The protein operates within amino-acid biosynthesis; L-proline biosynthesis; L-glutamate 5-semialdehyde from L-glutamate: step 2/2. Functionally, catalyzes the NADPH-dependent reduction of L-glutamate 5-phosphate into L-glutamate 5-semialdehyde and phosphate. The product spontaneously undergoes cyclization to form 1-pyrroline-5-carboxylate. The chain is Gamma-glutamyl phosphate reductase from Pseudomonas aeruginosa (strain LESB58).